Consider the following 241-residue polypeptide: Meiotically up-regulated gene 130 protein (241 aa).

The protein localises to the mitochondrion. Its function is as follows. Has a role in meiosis. The sequence is that of Meiotically up-regulated gene 130 protein (mug130) from Schizosaccharomyces pombe (strain 972 / ATCC 24843) (Fission yeast).